A 760-amino-acid chain; its full sequence is uncharacterized protein (760 aa).

Positions 1-20 (MKFKLFLGSSFFGVATLLIA) are cleaved as a signal peptide. Residue C21 is the site of N-palmitoyl cysteine attachment. C21 carries S-diacylglycerol cysteine lipidation. Disordered stretches follow at residues 221–243 (ENAA…LQLK), 272–315 (AKTN…TSDD), and 705–741 (IKAT…NDKA). Over residues 272-284 (AKTNGEKGNEKQE) the composition is skewed to basic and acidic residues. Residues 300–312 (KNTSQDKTQNTQT) are compositionally biased toward polar residues. Residues 705–721 (IKATSKEGEQNQGKKGD) are compositionally biased toward basic and acidic residues.

Belongs to the MG185/MG260 family.

It is found in the cell membrane. This is an uncharacterized protein from Mycoplasma pneumoniae (strain ATCC 29342 / M129 / Subtype 1) (Mycoplasmoides pneumoniae).